Consider the following 261-residue polypeptide: Zinc import ATP-binding protein ZnuC (261 aa).

Residues 5-220 (ISLKALSVTF…PSYIALFGSA (216 aa)) enclose the ABC transporter domain. 37–44 (GPNGAGKS) lines the ATP pocket. The segment at 236–261 (HHDLAGQPVSGDATQCNHHHHGHHHD) is disordered. Residues 252-261 (NHHHHGHHHD) are compositionally biased toward basic residues.

The protein belongs to the ABC transporter superfamily. Zinc importer (TC 3.A.1.15.5) family. As to quaternary structure, the complex is composed of two ATP-binding proteins (ZnuC), two transmembrane proteins (ZnuB) and a solute-binding protein (ZnuA).

It is found in the cell inner membrane. It catalyses the reaction Zn(2+)(out) + ATP(in) + H2O(in) = Zn(2+)(in) + ADP(in) + phosphate(in) + H(+)(in). Its function is as follows. Part of the ABC transporter complex ZnuABC involved in zinc import. Responsible for energy coupling to the transport system. The protein is Zinc import ATP-binding protein ZnuC of Vibrio vulnificus (strain CMCP6).